The primary structure comprises 424 residues: Riboflavin biosynthesis protein RibBA (424 aa).

The tract at residues 1–206 is DHBP synthase; sequence MVTCEAGIAS…VDDLITYRWT (206 aa). D-ribulose 5-phosphate-binding positions include 32 to 33, aspartate 37, 145 to 149, and glutamate 169; these read RE and RPGHT. Position 33 (glutamate 33) interacts with Mg(2+). Position 148 (histidine 148) interacts with Mg(2+). Positions 207–424 are GTP cyclohydrolase II; the sequence is FDSLVEHVSS…YETVERTSCC (218 aa). 257–261 is a binding site for GTP; that stretch reads RVHSE. Positions 262, 273, and 275 each coordinate Zn(2+). Residues glutamine 278, 301-303, and threonine 323 contribute to the GTP site; that span reads EGR. Aspartate 335 serves as the catalytic Proton acceptor; for GTP cyclohydrolase activity. The active-site Nucleophile; for GTP cyclohydrolase activity is the arginine 337. GTP-binding residues include threonine 358 and lysine 363.

This sequence in the N-terminal section; belongs to the DHBP synthase family. It in the C-terminal section; belongs to the GTP cyclohydrolase II family. Mg(2+) is required as a cofactor. The cofactor is Mn(2+). It depends on Zn(2+) as a cofactor.

It carries out the reaction D-ribulose 5-phosphate = (2S)-2-hydroxy-3-oxobutyl phosphate + formate + H(+). The catalysed reaction is GTP + 4 H2O = 2,5-diamino-6-hydroxy-4-(5-phosphoribosylamino)-pyrimidine + formate + 2 phosphate + 3 H(+). The protein operates within cofactor biosynthesis; riboflavin biosynthesis; 2-hydroxy-3-oxobutyl phosphate from D-ribulose 5-phosphate: step 1/1. It participates in cofactor biosynthesis; riboflavin biosynthesis; 5-amino-6-(D-ribitylamino)uracil from GTP: step 1/4. In terms of biological role, catalyzes the conversion of D-ribulose 5-phosphate to formate and 3,4-dihydroxy-2-butanone 4-phosphate. Functionally, catalyzes the conversion of GTP to 2,5-diamino-6-ribosylamino-4(3H)-pyrimidinone 5'-phosphate (DARP), formate and pyrophosphate. The protein is Riboflavin biosynthesis protein RibBA of Chlamydia muridarum (strain MoPn / Nigg).